The primary structure comprises 325 residues: Beta-ketoacyl-[acyl-carrier-protein] synthase III (325 aa).

Catalysis depends on residues cysteine 119 and histidine 252. The segment at 253-257 (QANIR) is ACP-binding. The active site involves asparagine 282.

It belongs to the thiolase-like superfamily. FabH family. As to quaternary structure, homodimer.

It is found in the cytoplasm. It catalyses the reaction malonyl-[ACP] + acetyl-CoA + H(+) = 3-oxobutanoyl-[ACP] + CO2 + CoA. It participates in lipid metabolism; fatty acid biosynthesis. Functionally, catalyzes the condensation reaction of fatty acid synthesis by the addition to an acyl acceptor of two carbons from malonyl-ACP. Catalyzes the first condensation reaction which initiates fatty acid synthesis and may therefore play a role in governing the total rate of fatty acid production. Possesses both acetoacetyl-ACP synthase and acetyl transacylase activities. Its substrate specificity determines the biosynthesis of branched-chain and/or straight-chain of fatty acids. The protein is Beta-ketoacyl-[acyl-carrier-protein] synthase III of Paracidovorax citrulli (strain AAC00-1) (Acidovorax citrulli).